Here is a 311-residue protein sequence, read N- to C-terminus: 4-hydroxy-tetrahydrodipicolinate synthase (311 aa).

Residue threonine 51 coordinates pyruvate. Tyrosine 140 acts as the Proton donor/acceptor in catalysis. Lysine 168 serves as the catalytic Schiff-base intermediate with substrate. Isoleucine 209 is a binding site for pyruvate.

The protein belongs to the DapA family. Homotetramer; dimer of dimers.

It localises to the cytoplasm. It carries out the reaction L-aspartate 4-semialdehyde + pyruvate = (2S,4S)-4-hydroxy-2,3,4,5-tetrahydrodipicolinate + H2O + H(+). The protein operates within amino-acid biosynthesis; L-lysine biosynthesis via DAP pathway; (S)-tetrahydrodipicolinate from L-aspartate: step 3/4. In terms of biological role, catalyzes the condensation of (S)-aspartate-beta-semialdehyde [(S)-ASA] and pyruvate to 4-hydroxy-tetrahydrodipicolinate (HTPA). In Streptococcus gordonii (strain Challis / ATCC 35105 / BCRC 15272 / CH1 / DL1 / V288), this protein is 4-hydroxy-tetrahydrodipicolinate synthase.